The chain runs to 93 residues: MARSLKKGPFVDDHVMKKVIAAKKVNDGKPIKTWSRRSTIIPDMIGLTFNVHNGKSFIPVYITENHIGYKLGEFAPTRTFKGHKGSVQKKIGK.

The protein belongs to the universal ribosomal protein uS19 family.

Protein S19 forms a complex with S13 that binds strongly to the 16S ribosomal RNA. The chain is Small ribosomal subunit protein uS19 from Campylobacter lari (strain RM2100 / D67 / ATCC BAA-1060).